Consider the following 366-residue polypeptide: MGSTGSETQMTPTQVSDEEANLFAMQLASASVLPMVLKAAIELDLLEIMAKAGPGAFLSPGEVAAQLPTQNPEAPVMLDRIFRLLASYSVLTCTLRNLPDGKVERLYGLAPVCKFLVKNEDGVSIAALNLMNQDKILMESWYYLKDAVLEGGIPFNKAYGMTAFEYHGTDPRFNKIFNRGMSDHSTITMKKILETYKGFEGLETVVDVGGGTGAVLSMIVAKYPSMKGINFDLPHVIEDAPPLPGVKHVGGDMFVSVPKGDAIFMKWICHDWSDDHCAKFLKNCYDALPNIGKVIVAECVLPVYPDTSLATKNVIHIDCIMLAHNPGGKERTQKEFETLAKGAGFQGFQVMCCAFGTHVMEFLKTA.

131–137 serves as a coordination point for substrate; sequence MNQDKIL. Positions 163–181 are substrate binding; it reads AFEYHGTDPRFNKIFNRGM. S-adenosyl-L-methionine is bound by residues G209, D232, D252, M253, and K266. H270 acts as the Proton acceptor in catalysis.

It belongs to the class I-like SAM-binding methyltransferase superfamily. Cation-independent O-methyltransferase family. COMT subfamily. In terms of assembly, homodimer.

The enzyme catalyses (E)-caffeate + S-adenosyl-L-methionine = (E)-ferulate + S-adenosyl-L-homocysteine + H(+). It participates in aromatic compound metabolism; phenylpropanoid biosynthesis. Catalyzes the conversion of caffeic acid to ferulic acid and of 5-hydroxyferulic acid to sinapic acid. The resulting products may subsequently be converted to the corresponding alcohols that are incorporated into lignins. The sequence is that of Caffeic acid 3-O-methyltransferase (OMT) from Eucalyptus gunnii (Cider gum).